The sequence spans 174 residues: FMN-dependent NADPH-azoreductase (174 aa).

FMN-binding positions include 9-11 (TPR), 15-16 (RT), 73-76 (EYHS), and Gly106.

Belongs to the azoreductase type 2 family. Homotetramer. It depends on FMN as a cofactor.

Functionally, catalyzes the reductive cleavage of azo bond in aromatic azo compounds to the corresponding amines. Requires NADPH, but not NADH, as an electron donor for its activity. This Bacillus subtilis (strain 168) protein is FMN-dependent NADPH-azoreductase (azr).